Reading from the N-terminus, the 251-residue chain is Triosephosphate isomerase (251 aa).

A substrate-binding site is contributed by 9–11 (NWK). Catalysis depends on H95, which acts as the Electrophile. E167 functions as the Proton acceptor in the catalytic mechanism. Substrate-binding positions include G173, S213, and 234–235 (GG). S213 is modified (phosphoserine).

The protein belongs to the triosephosphate isomerase family. As to quaternary structure, homodimer.

The protein localises to the cytoplasm. It catalyses the reaction D-glyceraldehyde 3-phosphate = dihydroxyacetone phosphate. Its pathway is carbohydrate biosynthesis; gluconeogenesis. The protein operates within carbohydrate degradation; glycolysis; D-glyceraldehyde 3-phosphate from glycerone phosphate: step 1/1. In terms of biological role, involved in the gluconeogenesis. Catalyzes stereospecifically the conversion of dihydroxyacetone phosphate (DHAP) to D-glyceraldehyde-3-phosphate (G3P). The protein is Triosephosphate isomerase of Bacillus anthracis.